Here is a 73-residue protein sequence, read N- to C-terminus: Conotoxin Lt9a (73 aa).

Residues Met1 to Val23 form the signal peptide. A propeptide spanning residues Gln24 to Ser40 is cleaved from the precursor. 3 disulfides stabilise this stretch: Cys48/Cys62, Cys53/Cys64, and Cys59/Cys69.

The protein belongs to the conotoxin P superfamily. In terms of tissue distribution, expressed by the venom duct.

The protein localises to the secreted. Functionally, probable neurotoxin that inhibits ion channels. The protein is Conotoxin Lt9a of Conus litteratus (Lettered cone).